The primary structure comprises 238 residues: Trypsin-3 (238 aa).

The first 7 residues, 1-7, serve as a signal peptide directing secretion; that stretch reads FAVAFAA. Positions 8–15 are cleaved as a propeptide — activation peptide; sequence PIDDEDDK. Positions 16–236 constitute a Peptidase S1 domain; it reads IVGGYECRKN…YRSWISSTMS (221 aa). 6 disulfides stabilise this stretch: cysteine 22–cysteine 152, cysteine 40–cysteine 56, cysteine 124–cysteine 225, cysteine 131–cysteine 198, cysteine 163–cysteine 177, and cysteine 188–cysteine 212. Histidine 55 acts as the Charge relay system in catalysis. Glutamate 67, asparagine 69, valine 72, and glutamate 77 together coordinate Ca(2+). Aspartate 99 (charge relay system) is an active-site residue. The Charge relay system role is filled by serine 192.

This sequence belongs to the peptidase S1 family. Ca(2+) is required as a cofactor.

Its subcellular location is the secreted. The protein localises to the extracellular space. The enzyme catalyses Preferential cleavage: Arg-|-Xaa, Lys-|-Xaa.. In Salmo salar (Atlantic salmon), this protein is Trypsin-3.